The sequence spans 186 residues: Peptidyl-tRNA hydrolase (186 aa).

Tyr-15 contributes to the tRNA binding site. Residue His-20 is the Proton acceptor of the active site. TRNA-binding residues include Tyr-64, Asn-66, and Asn-112.

It belongs to the PTH family. In terms of assembly, monomer.

Its subcellular location is the cytoplasm. The enzyme catalyses an N-acyl-L-alpha-aminoacyl-tRNA + H2O = an N-acyl-L-amino acid + a tRNA + H(+). Functionally, hydrolyzes ribosome-free peptidyl-tRNAs (with 1 or more amino acids incorporated), which drop off the ribosome during protein synthesis, or as a result of ribosome stalling. In terms of biological role, catalyzes the release of premature peptidyl moieties from peptidyl-tRNA molecules trapped in stalled 50S ribosomal subunits, and thus maintains levels of free tRNAs and 50S ribosomes. This is Peptidyl-tRNA hydrolase from Azobacteroides pseudotrichonymphae genomovar. CFP2.